Consider the following 408-residue polypeptide: Multifunctional CCA protein (408 aa).

2 residues coordinate ATP: Gly-8 and Arg-11. CTP is bound by residues Gly-8 and Arg-11. Mg(2+) is bound by residues Asp-21 and Asp-23. Arg-91, Arg-137, and Arg-140 together coordinate ATP. Arg-91, Arg-137, and Arg-140 together coordinate CTP. One can recognise an HD domain in the interval 228-329; it reads TGVHVLSVLE…LELLQSFDVY (102 aa).

Belongs to the tRNA nucleotidyltransferase/poly(A) polymerase family. Bacterial CCA-adding enzyme type 1 subfamily. Monomer. Can also form homodimers and oligomers. The cofactor is Mg(2+). Ni(2+) serves as cofactor.

The enzyme catalyses a tRNA precursor + 2 CTP + ATP = a tRNA with a 3' CCA end + 3 diphosphate. The catalysed reaction is a tRNA with a 3' CCA end + 2 CTP + ATP = a tRNA with a 3' CCACCA end + 3 diphosphate. Functionally, catalyzes the addition and repair of the essential 3'-terminal CCA sequence in tRNAs without using a nucleic acid template. Adds these three nucleotides in the order of C, C, and A to the tRNA nucleotide-73, using CTP and ATP as substrates and producing inorganic pyrophosphate. tRNA 3'-terminal CCA addition is required both for tRNA processing and repair. Also involved in tRNA surveillance by mediating tandem CCA addition to generate a CCACCA at the 3' terminus of unstable tRNAs. While stable tRNAs receive only 3'-terminal CCA, unstable tRNAs are marked with CCACCA and rapidly degraded. The polypeptide is Multifunctional CCA protein (Pseudomonas syringae pv. syringae (strain B728a)).